We begin with the raw amino-acid sequence, 130 residues long: Phosphoribosyl-AMP cyclohydrolase (130 aa).

A Mg(2+)-binding site is contributed by Asp-77. Cys-78 lines the Zn(2+) pocket. Mg(2+)-binding residues include Asp-79 and Asp-81. Zn(2+) contacts are provided by Cys-95 and Cys-102.

It belongs to the PRA-CH family. As to quaternary structure, homodimer. The cofactor is Mg(2+). Zn(2+) is required as a cofactor.

It localises to the cytoplasm. The enzyme catalyses 1-(5-phospho-beta-D-ribosyl)-5'-AMP + H2O = 1-(5-phospho-beta-D-ribosyl)-5-[(5-phospho-beta-D-ribosylamino)methylideneamino]imidazole-4-carboxamide. The protein operates within amino-acid biosynthesis; L-histidine biosynthesis; L-histidine from 5-phospho-alpha-D-ribose 1-diphosphate: step 3/9. Catalyzes the hydrolysis of the adenine ring of phosphoribosyl-AMP. The chain is Phosphoribosyl-AMP cyclohydrolase from Pseudomonas syringae pv. tomato (strain ATCC BAA-871 / DC3000).